The following is a 118-amino-acid chain: Non-specific lipid-transfer protein 3 (118 aa).

An N-terminal signal peptide occupies residues 1–25; sequence MARAAATQLVLVAMVAAMLLVATDA. Disulfide bonds link C29–C77, C39–C54, C55–C100, and C75–C114.

Belongs to the plant LTP family.

In terms of biological role, plant non-specific lipid-transfer proteins transfer phospholipids as well as galactolipids across membranes. May play a role in wax or cutin deposition in the cell walls of expanding epidermal cells and certain secretory tissues. In Hordeum vulgare (Barley), this protein is Non-specific lipid-transfer protein 3 (LTP3).